The sequence spans 397 residues: uncharacterized protein (397 aa).

Disordered regions lie at residues 159-203 (LNSS…KSTI) and 221-397 (NSVK…KTKN). Positions 221–240 (NSVKSSPSKSFVSISSPVQS) are enriched in low complexity. 2 stretches are compositionally biased toward polar residues: residues 285–309 (TSTL…SSST) and 320–330 (VNPNSTSSVTF). The segment at residues 342-371 (CSRCKKSKKGCDRQRPCGRCRDAGLNSEDC) is a DNA-binding region (zn(2)-C6 fungal-type). The span at 350-363 (KGCDRQRPCGRCRD) shows a compositional bias: basic and acidic residues. Residues 383–397 (RKPRGRGRGRPKTKN) show a composition bias toward basic residues.

The protein resides in the nucleus. This is an uncharacterized protein from Schizosaccharomyces pombe (strain 972 / ATCC 24843) (Fission yeast).